A 434-amino-acid chain; its full sequence is Enolase (434 aa).

Residue Gln167 coordinates (2R)-2-phosphoglycerate. Glu209 functions as the Proton donor in the catalytic mechanism. Positions 246, 291, and 318 each coordinate Mg(2+). Residues Lys343, Arg372, Ser373, and Lys394 each coordinate (2R)-2-phosphoglycerate. Lys343 (proton acceptor) is an active-site residue.

The protein belongs to the enolase family. In terms of assembly, component of the RNA degradosome, a multiprotein complex involved in RNA processing and mRNA degradation. Requires Mg(2+) as cofactor.

It localises to the cytoplasm. The protein resides in the secreted. It is found in the cell surface. The catalysed reaction is (2R)-2-phosphoglycerate = phosphoenolpyruvate + H2O. Its pathway is carbohydrate degradation; glycolysis; pyruvate from D-glyceraldehyde 3-phosphate: step 4/5. Its function is as follows. Catalyzes the reversible conversion of 2-phosphoglycerate (2-PG) into phosphoenolpyruvate (PEP). It is essential for the degradation of carbohydrates via glycolysis. This is Enolase from Buchnera aphidicola subsp. Acyrthosiphon pisum (strain 5A).